The primary structure comprises 310 residues: Zinc finger protein-like 1 (310 aa).

The segment at 1–43 (MGLCKCPKRKVTNLFCFEHRVNVCEHCLVANHAKCIVQSYLQW) adopts a B box-type; degenerate zinc-finger fold. The Cytoplasmic segment spans residues 1–266 (MGLCKCPKRK…RPLTLLQRAG (266 aa)). The segment at 53–101 (CRLCNIPLASRETTRLVCYDLFHWACLNERAAQLPRNTAPAGYQCPSCN) adopts an RING-type; degenerate zinc-finger fold. The disordered stretch occupies residues 145–231 (PEPLNTSDFS…RTPGLHGDCD (87 aa)). The segment covering 148 to 165 (LNTSDFSDWSSFNASSTP) has biased composition (polar residues). Basic and acidic residues predominate over residues 213–224 (KVYDTRDDDRTP). A helical transmembrane segment spans residues 267 to 287 (LLLLLGLLGFLALLALMSRLG). Over 288 to 310 (RAAADSDPNLDPLMNPHIRVGPS) the chain is Lumenal.

This sequence belongs to the ZFPL1 family. As to quaternary structure, interacts with GOLGA2/GM130. In terms of processing, phosphorylated. In terms of tissue distribution, expressed strongly in the exocrine pancreas.

The protein localises to the golgi apparatus. It localises to the cis-Golgi network membrane. Functionally, required for cis-Golgi integrity and efficient ER to Golgi transport. Involved in the maintenance of the integrity of the cis-Golgi, possibly via its interaction with GOLGA2/GM130. The sequence is that of Zinc finger protein-like 1 (ZFPL1) from Homo sapiens (Human).